The primary structure comprises 345 residues: Protein phosphatase 1 regulatory subunit 7 (345 aa).

A disordered region spans residues 1 to 53 (MATLSVGEPQEMEVDRRGESEESGDDETKRKSLNGEVDSLQAPSTVPEESPVD). The span at 13 to 30 (EVDRRGESEESGDDETKR) shows a compositional bias: basic and acidic residues. LRR repeat units lie at residues 62–83 (EEED…EVLL), 84–105 (KAKT…ESLV), 106–127 (SLRE…QALT), 128–149 (ELEQ…DSLT), 150–171 (KVKK…DHLT), 172–193 (SLQM…DSLS), 194–215 (SLES…DGLH), 216–237 (NLTV…QNLV), 238–259 (NLRE…ENNK), 260–281 (KLST…SHLT), and 282–303 (DLKE…DELK). The LRRCT domain maps to 316–345 (NPLQKDPQYRRKIMLALPSVRQIDATFIRF).

It belongs to the SDS22 family.

The protein localises to the nucleus. In terms of biological role, regulatory subunit of protein phosphatase 1. In Danio rerio (Zebrafish), this protein is Protein phosphatase 1 regulatory subunit 7 (ppp1r7).